A 514-amino-acid chain; its full sequence is Na(+)/H(+) antiporter NhaB (514 aa).

12 helical membrane-spanning segments follow: residues 23 to 43 (LALL…PFIA), 63 to 83 (PLLP…TSAA), 97 to 117 (LLLM…LFIF), 120 to 140 (LLLS…AAAF), 144 to 164 (FLDA…FYGI), 202 to 222 (LMMH…VGEP), 238 to 258 (FFLR…LTCM), 303 to 323 (AVIG…VGLI), 357 to 377 (LTVF…APII), 391 to 411 (LFYL…VGTI), 447 to 467 (ATPN…APLI), and 475 to 495 (VWMA…CVEF).

It belongs to the NhaB Na(+)/H(+) (TC 2.A.34) antiporter family.

The protein resides in the cell inner membrane. It carries out the reaction 2 Na(+)(in) + 3 H(+)(out) = 2 Na(+)(out) + 3 H(+)(in). Its function is as follows. Na(+)/H(+) antiporter that extrudes sodium in exchange for external protons. This Salmonella choleraesuis (strain SC-B67) protein is Na(+)/H(+) antiporter NhaB.